The primary structure comprises 240 residues: NAD(P)H-quinone oxidoreductase subunit K (240 aa).

Positions 55, 56, 120, and 151 each coordinate [4Fe-4S] cluster.

It belongs to the complex I 20 kDa subunit family. As to quaternary structure, NDH-1 can be composed of about 15 different subunits; different subcomplexes with different compositions have been identified which probably have different functions. It depends on [4Fe-4S] cluster as a cofactor.

Its subcellular location is the cellular thylakoid membrane. The catalysed reaction is a plastoquinone + NADH + (n+1) H(+)(in) = a plastoquinol + NAD(+) + n H(+)(out). It carries out the reaction a plastoquinone + NADPH + (n+1) H(+)(in) = a plastoquinol + NADP(+) + n H(+)(out). NDH-1 shuttles electrons from an unknown electron donor, via FMN and iron-sulfur (Fe-S) centers, to quinones in the respiratory and/or the photosynthetic chain. The immediate electron acceptor for the enzyme in this species is believed to be plastoquinone. Couples the redox reaction to proton translocation, and thus conserves the redox energy in a proton gradient. Cyanobacterial NDH-1 also plays a role in inorganic carbon-concentration. The polypeptide is NAD(P)H-quinone oxidoreductase subunit K (Trichodesmium erythraeum (strain IMS101)).